The chain runs to 509 residues: Ribonuclease Y (509 aa).

Residues 5-25 (IAGVSGIAGAAVGAGACYLWL) form a helical membrane-spanning segment. One can recognise a KH domain in the interval 199 to 265 (LINLVNLPSD…TRVIEILIED (67 aa)). An HD domain is found at 325–418 (ALAHTLEVAK…VCAADTLSAA (94 aa)).

It belongs to the RNase Y family.

The protein resides in the cell membrane. In terms of biological role, endoribonuclease that initiates mRNA decay. This Sulfurovum sp. (strain NBC37-1) protein is Ribonuclease Y.